Consider the following 181-residue polypeptide: UPF0232 protein SAV_4320 (181 aa).

Over residues 1 to 10 (MSDTPAQTPE) the composition is skewed to polar residues. Disordered stretches follow at residues 1 to 64 (MSDT…GRDP) and 156 to 181 (QGPGGPARRYGPLRAPGSTGPGDTYG). The span at 30–39 (AAKEQARARG) shows a compositional bias: basic and acidic residues.

This sequence belongs to the UPF0232 family.

In Streptomyces avermitilis (strain ATCC 31267 / DSM 46492 / JCM 5070 / NBRC 14893 / NCIMB 12804 / NRRL 8165 / MA-4680), this protein is UPF0232 protein SAV_4320.